The following is a 122-amino-acid chain: MIQQQTLLKVGDNTGARKLMCIRVLGGSKRRYASVGDVIIASVKEATPGGVVKKGDVVRAVVVRTKKAVKRPDGSYIRFNENAAVIINEQNNPRGTRIFGPVARELREKDFMKIISLAPEVL.

The protein belongs to the universal ribosomal protein uL14 family. As to quaternary structure, part of the 50S ribosomal subunit. Forms a cluster with proteins L3 and L19. In the 70S ribosome, L14 and L19 interact and together make contacts with the 16S rRNA in bridges B5 and B8.

Functionally, binds to 23S rRNA. Forms part of two intersubunit bridges in the 70S ribosome. The sequence is that of Large ribosomal subunit protein uL14 from Moorella thermoacetica (strain ATCC 39073 / JCM 9320).